The following is a 347-amino-acid chain: Putative GDP-L-fucose synthase 2 (347 aa).

A disordered region spans residues 1 to 20 (MPSQQRSSSGSTAKAGDADG). 41–47 (GHRGMVG) serves as a coordination point for NADP(+). Tyr168 (proton donor/acceptor) is an active-site residue. NADP(+) is bound by residues Lys172, 195-198 (PNNL), and His211. Positions 219, 234, 241, and 301 each coordinate substrate.

It belongs to the NAD(P)-dependent epimerase/dehydratase family. Fucose synthase subfamily. Homodimer.

The catalysed reaction is GDP-beta-L-fucose + NADP(+) = GDP-4-dehydro-alpha-D-rhamnose + NADPH + H(+). It functions in the pathway nucleotide-sugar biosynthesis; GDP-L-fucose biosynthesis via de novo pathway; GDP-L-fucose from GDP-alpha-D-mannose: step 2/2. Its function is as follows. Catalyzes the two-step NADP-dependent conversion of GDP-4-dehydro-6-deoxy-D-mannose to GDP-fucose, involving an epimerase and a reductase reaction. The polypeptide is Putative GDP-L-fucose synthase 2 (Oryza sativa subsp. japonica (Rice)).